Reading from the N-terminus, the 200-residue chain is Snake venom metalloproteinase hemorrhagic factor 2 (200 aa).

One can recognise a Peptidase M12B domain in the interval Lys4–Pro200. Glu7 is a Ca(2+) binding site. N-linked (GlcNAc...) asparagine glycosylation is present at Asn70. Residue Asp91 participates in Ca(2+) binding. 3 cysteine pairs are disulfide-bonded: Cys115/Cys195, Cys155/Cys179, and Cys157/Cys162. Zn(2+) is bound at residue His140. Glu141 is a catalytic residue. Zn(2+) contacts are provided by His144 and His150. Ca(2+) contacts are provided by Cys195 and Asn198.

It belongs to the venom metalloproteinase (M12B) family. P-I subfamily. As to quaternary structure, monomer. Zn(2+) serves as cofactor. In terms of tissue distribution, expressed by the venom gland.

It localises to the secreted. Its function is as follows. Snake venom zinc metalloproteinase that induces weak hemorrhage and mild myonecrosis. Shows mild myotoxicity by killing myocytes. Also induces edema in the mouse footpad at doses where hemorrhage is absent. In vitro, degrades laminin, fibronectin, and type IV collagen, suggesting this toxin play a role in local tissue damage by degrading extracellular matrix, and possibly by degrading muscle extracellular matrix. Hemorrhage is not due to cytotoxicity towards endothelial cells in culture, and may only play a minor role in local bleeding characteristic of L.muta envenomations. Also induces the synthesis of several endogenous matrix metalloproteinases, which in turn, may participate in extracellular matrix degradation. This Lachesis muta muta (Bushmaster) protein is Snake venom metalloproteinase hemorrhagic factor 2.